The following is a 114-amino-acid chain: Large ribosomal subunit protein eL30 (114 aa).

The protein belongs to the eukaryotic ribosomal protein eL30 family.

In Branchiostoma belcheri (Amphioxus), this protein is Large ribosomal subunit protein eL30 (RPL30).